Consider the following 159-residue polypeptide: Ribosomal RNA large subunit methyltransferase H (159 aa).

Residues Leu-76, Gly-108, and 127–132 (FSKMTL) each bind S-adenosyl-L-methionine.

Belongs to the RNA methyltransferase RlmH family. As to quaternary structure, homodimer.

It localises to the cytoplasm. The catalysed reaction is pseudouridine(1915) in 23S rRNA + S-adenosyl-L-methionine = N(3)-methylpseudouridine(1915) in 23S rRNA + S-adenosyl-L-homocysteine + H(+). Functionally, specifically methylates the pseudouridine at position 1915 (m3Psi1915) in 23S rRNA. This is Ribosomal RNA large subunit methyltransferase H from Bacillus cereus (strain ATCC 14579 / DSM 31 / CCUG 7414 / JCM 2152 / NBRC 15305 / NCIMB 9373 / NCTC 2599 / NRRL B-3711).